Reading from the N-terminus, the 316-residue chain is Diacylglycerol kinase (316 aa).

The DAGKc domain occupies 1–132 (MRKRARIIYN…VDIGKMNNRY (132 aa)). ATP contacts are provided by residues 10 to 14 (NPTSG), threonine 41, 67 to 73 (GDGTLNE), and threonine 94. Mg(2+) is bound by residues lysine 213, aspartate 216, and tyrosine 218. The active-site Proton acceptor is glutamate 273.

It belongs to the diacylglycerol/lipid kinase family. As to quaternary structure, homodimer. Requires Mg(2+) as cofactor.

The catalysed reaction is a 1,2-diacyl-sn-glycerol + ATP = a 1,2-diacyl-sn-glycero-3-phosphate + ADP + H(+). Its function is as follows. Catalyzes the phosphorylation of diacylglycerol (DAG) into phosphatidic acid. Is a key enzyme involved in the production of lipoteichoic acid by reintroducing DAG formed from the breakdown of membrane phospholipids into the phosphatidylglycerol biosynthetic pathway. In Staphylococcus epidermidis (strain ATCC 35984 / DSM 28319 / BCRC 17069 / CCUG 31568 / BM 3577 / RP62A), this protein is Diacylglycerol kinase (dagK).